The primary structure comprises 205 residues: Golgi to ER traffic protein 1 (205 aa).

Residues 1–3 are Lumenal-facing; it reads MDY. The chain crosses the membrane as a helical span at residues 4–24; the sequence is WILLVLAFLVADKSWHLTGLL. Residues 25–96 are Cytoplasmic-facing; it reads ATKLTSPERL…ATKARLAKLK (72 aa). Residues 32 to 96 adopt a coiled-coil conformation; it reads ERLQQLIRER…ATKARLAKLK (65 aa). The chain crosses the membrane as a helical span at residues 97–117; it reads LLVVTVPFTALKFYKGKLPVY. Topologically, residues 118-156 are lumenal; that stretch reads ALPKGMFPRFIEGTLEHGWLYMALAPLNMKQFSEGASVA. Residues 157-173 traverse the membrane as a helical segment; that stretch reads VSLGIWLFALLRVLGAI. Over 174-205 the chain is Cytoplasmic; sequence EFVLETLREQNPQVATETAKVHARTAQAASAN.

This sequence belongs to the WRB/GET1 family. In terms of assembly, component of the Golgi to ER traffic (GET) complex, which is composed of GET1, GET2 and GET3. Within the complex, GET1 and GET2 form a heterotetramer which is stabilized by phosphatidylinositol binding and which binds to the GET3 homodimer.

It localises to the endoplasmic reticulum membrane. It is found in the golgi apparatus membrane. Required for the post-translational delivery of tail-anchored (TA) proteins to the endoplasmic reticulum. Together with GET2, acts as a membrane receptor for soluble GET3, which recognizes and selectively binds the transmembrane domain of TA proteins in the cytosol. The GET complex cooperates with the HDEL receptor ERD2 to mediate the ATP-dependent retrieval of resident ER proteins that contain a C-terminal H-D-E-L retention signal from the Golgi to the ER. This is Golgi to ER traffic protein 1 from Eremothecium gossypii (strain ATCC 10895 / CBS 109.51 / FGSC 9923 / NRRL Y-1056) (Yeast).